The following is a 759-amino-acid chain: 5-methyltetrahydropteroyltriglutamate--homocysteine methyltransferase (759 aa).

Polar residues predominate over residues 1-16; the sequence is MTQPVRRQPFTATITG. The segment at 1-22 is disordered; it reads MTQPVRRQPFTATITGSPRIGP. 5-methyltetrahydropteroyltri-L-glutamate-binding positions include 24 to 27 and lysine 118; that span reads RELK. L-homocysteine-binding positions include 437–439 and glutamate 490; that span reads IGS. L-methionine contacts are provided by residues 437 to 439 and glutamate 490; that span reads IGS. 5-methyltetrahydropteroyltri-L-glutamate-binding positions include 521-522 and tryptophan 567; that span reads RC. Aspartate 605 lines the L-homocysteine pocket. L-methionine is bound at residue aspartate 605. Glutamate 611 is a 5-methyltetrahydropteroyltri-L-glutamate binding site. Positions 647, 649, and 671 each coordinate Zn(2+). The active-site Proton donor is the histidine 700. Cysteine 732 is a binding site for Zn(2+).

It belongs to the vitamin-B12 independent methionine synthase family. Zn(2+) serves as cofactor.

The enzyme catalyses 5-methyltetrahydropteroyltri-L-glutamate + L-homocysteine = tetrahydropteroyltri-L-glutamate + L-methionine. It functions in the pathway amino-acid biosynthesis; L-methionine biosynthesis via de novo pathway; L-methionine from L-homocysteine (MetE route): step 1/1. Its function is as follows. Catalyzes the transfer of a methyl group from 5-methyltetrahydrofolate to homocysteine resulting in methionine formation. The sequence is that of 5-methyltetrahydropteroyltriglutamate--homocysteine methyltransferase from Mycobacterium tuberculosis (strain ATCC 25177 / H37Ra).